A 90-amino-acid chain; its full sequence is ATP synthase subunit c (90 aa).

Helical transmembrane passes span 17 to 37 (PLAY…AGVV) and 70 to 90 (LAIV…IIFV).

This sequence belongs to the ATPase C chain family. As to quaternary structure, F-type ATPases have 2 components, F(1) - the catalytic core - and F(0) - the membrane proton channel. F(1) has five subunits: alpha(3), beta(3), gamma(1), delta(1), epsilon(1). F(0) has three main subunits: a(1), b(2) and c(10-14). The alpha and beta chains form an alternating ring which encloses part of the gamma chain. F(1) is attached to F(0) by a central stalk formed by the gamma and epsilon chains, while a peripheral stalk is formed by the delta and b chains.

It localises to the cell membrane. F(1)F(0) ATP synthase produces ATP from ADP in the presence of a proton or sodium gradient. F-type ATPases consist of two structural domains, F(1) containing the extramembraneous catalytic core and F(0) containing the membrane proton channel, linked together by a central stalk and a peripheral stalk. During catalysis, ATP synthesis in the catalytic domain of F(1) is coupled via a rotary mechanism of the central stalk subunits to proton translocation. Its function is as follows. Key component of the F(0) channel; it plays a direct role in translocation across the membrane. A homomeric c-ring of between 10-14 subunits forms the central stalk rotor element with the F(1) delta and epsilon subunits. The chain is ATP synthase subunit c from Metamycoplasma arthritidis (strain 158L3-1) (Mycoplasma arthritidis).